Consider the following 765-residue polypeptide: Proton-coupled zinc antiporter SLC30A5 (765 aa).

Methionine 1 is modified (N-acetylmethionine). Topologically, residues 1-32 (MEEKYGGDVLAGPGGGGGLGPVDVPSARLTKY) are cytoplasmic. Residues 33 to 53 (IVLLCFTKFLKAVGLFESYDL) form a helical membrane-spanning segment. The Lumenal segment spans residues 54–56 (LKA). Residues 57–77 (VHIVQFIFILKLGTAFFMVLF) form a helical membrane-spanning segment. The Cytoplasmic segment spans residues 78 to 98 (QKPFSSGKTITKHQWIKIFKH). A helical transmembrane segment spans residues 99-119 (AVAGCIISLLWFFGLTLCGPL). Residue arginine 120 is a topological domain, lumenal. The chain crosses the membrane as a helical span at residues 121 to 141 (TLLLFEHSDIVVISLLSVLFT). The Cytoplasmic portion of the chain corresponds to 142 to 152 (SSGGGPAKTRG). Residues 153–173 (AAFFIIAVICLLLFDNDDLMA) traverse the membrane as a helical segment. At 174-193 (KMAEHPEGHHDSALTHMLYT) the chain is on the lumenal side. A helical transmembrane segment spans residues 194–214 (AIAFLGVADHKGGVLLLVLAL). The Cytoplasmic portion of the chain corresponds to 215–238 (CCKVGFHTASRKLSVDVGGAKRLQ). A helical membrane pass occupies residues 239–259 (ALSHLVSVLLLCPWVIVLSVT). The Lumenal portion of the chain corresponds to 260 to 267 (TESKVESW). The chain crosses the membrane as a helical span at residues 268 to 288 (FSLIMPFATVIFFVMILDFYV). At 289 to 303 (DSICSVKMEVSKCAR) the chain is on the cytoplasmic side. A helical membrane pass occupies residues 304-324 (YGSFPIFISALLFGNFWTHPI). Residues 325–342 (TDQLRAMNKAAHQESTEH) are Lumenal-facing. Residues 343-363 (VLSGGVVVSAIFFILSANILS) traverse the membrane as a helical segment. Over 364-418 (SPSKRGQKGTLIGYSPEGTPLYNFMGDAFQHSSQSIPRFIKESLKQILEESDSRQ) the chain is Cytoplasmic. The chain crosses the membrane as a helical span at residues 419 to 439 (IFYFLCLNLLFTFVELFYGVL). Residues 420 to 640 (FYFLCLNLLF…ILIFLSVVPL (221 aa)) form a mediates homodimerization with SLC30A6 region. Topologically, residues 440-448 (TNSLGLISD) are lumenal. The helical transmembrane segment at 449-469 (GFHMLFDCSALVMGLFAALMS) threads the bilayer. Histidine 451 and aspartate 455 together coordinate Zn(2+). The Cytoplasmic segment spans residues 470-483 (RWKATRIFSYGYGR). Residues 484–504 (IEILSGFINGLFLIVIAFFVF) traverse the membrane as a helical segment. Topologically, residues 505 to 520 (MESVARLIDPPELDTH) are lumenal. The helical transmembrane segment at 521-541 (MLTPVSVGGLIVNLIGICAFS) threads the bilayer. Positions 542–578 (HAHSHAHGASQGSCHSSDHSHSHHMHGHSDHGHGHSH) are his-rich loop; required for zinc transport. At 542 to 592 (HAHSHAHGASQGSCHSSDHSHSHHMHGHSDHGHGHSHGSAGGGMNANMRGV) the chain is on the cytoplasmic side. The interval 551-581 (SQGSCHSSDHSHSHHMHGHSDHGHGHSHGSA) is disordered. Residues 593–613 (FLHVLADTLGSIGVIVSTVLI) traverse the membrane as a helical segment. 2 residues coordinate Zn(2+): histidine 595 and aspartate 599. Over 614–617 (EQFG) the chain is Lumenal. Residues 618-638 (WFIADPLCSLFIAILIFLSVV) traverse the membrane as a helical segment. The Cytoplasmic segment spans residues 639–765 (PLIKDACQVL…KYCKDGTYIM (127 aa)).

Belongs to the cation diffusion facilitator (CDF) transporter (TC 2.A.4) family. SLC30A subfamily. Heterodimer with SLC30A6/ZNT6; form a functional zinc ion transmembrane transporter. In terms of processing, could homodimerize through the formation of dityrosine bonds upon oxidative stress. As to expression, ubiquitously expressed. Highly expressed in pancreas, liver and kidney. Expressed abundantly in insulin-containing beta cells, undetectable in other endocrine cell types including glucagon-secreting alpha cells and most acinar cells (at protein level).

Its subcellular location is the golgi apparatus. The protein resides in the golgi stack membrane. It is found in the cytoplasmic vesicle. It localises to the COPII-coated vesicle membrane. The protein localises to the secretory vesicle membrane. Its subcellular location is the trans-Golgi network membrane. The protein resides in the endoplasmic reticulum membrane. It is found in the cell membrane. It localises to the apical cell membrane. The enzyme catalyses Zn(2+)(in) + 2 H(+)(out) = Zn(2+)(out) + 2 H(+)(in). Together with SLC30A6 forms a functional proton-coupled zinc ion antiporter mediating zinc entry into the lumen of organelles along the secretory pathway. By contributing to zinc ion homeostasis within the early secretory pathway, regulates the activation and folding of enzymes like alkaline phosphatases and enzymes involved in phosphatidylinositol glycan anchor biosynthesis. Through the transport of zinc into secretory granules of pancreatic beta-cells, plays an important role in the storage and secretion of insulin. Functionally, zinc ion:proton antiporter mediating influx and efflux of zinc at the plasma membrane. This chain is Proton-coupled zinc antiporter SLC30A5, found in Homo sapiens (Human).